A 184-amino-acid polypeptide reads, in one-letter code: MHNELKQGYENIITAVGEDPNREGLLDTPKRAAKAMEYLTQGYRQTLEEITNNAVFTSDADDMVLVQDIELYSMCEHHLLPFTGRCHIAYIPNGKVLGLSKFARIVDMFARRFQIQEQLTHQIAKAVEEVTGATGVGVIVEAKHMCMMMRGVEKQNSSMRTSVMLGNFRADPKTRNEFLQLIKG.

Cys75, His78, and Cys146 together coordinate Zn(2+).

This sequence belongs to the GTP cyclohydrolase I family. Toroid-shaped homodecamer, composed of two pentamers of five dimers.

It catalyses the reaction GTP + H2O = 7,8-dihydroneopterin 3'-triphosphate + formate + H(+). Its pathway is cofactor biosynthesis; 7,8-dihydroneopterin triphosphate biosynthesis; 7,8-dihydroneopterin triphosphate from GTP: step 1/1. The sequence is that of GTP cyclohydrolase 1 from Pseudoalteromonas translucida (strain TAC 125).